A 459-amino-acid chain; its full sequence is Probable Delta(5) fatty acid desaturase C (459 aa).

The Cytochrome b5 heme-binding domain occupies 9-87 (KKLYSWKEIS…LKQYEIGQVS (79 aa)). 2 residues coordinate heme: His45 and His68. 2 consecutive transmembrane segments (helical) span residues 121–141 (FAFG…TSYY) and 151–171 (FYLN…FSLH). A Histidine box-1 motif is present at residues 174 to 178 (HDACH). Residues 187-207 (VWKWLGATYDLFIGASFFYWC) traverse the membrane as a helical segment. The Histidine box-2 signature appears at 210–215 (HVIGHH). Helical transmembrane passes span 289 to 309 (FEII…FIIP) and 315 to 335 (LVNL…YLSF). Residues 394–398 (QVVHH) carry the Histidine box-3 motif.

Belongs to the fatty acid desaturase type 1 family. It depends on Fe cation as a cofactor.

It localises to the membrane. This chain is Probable Delta(5) fatty acid desaturase C, found in Dictyostelium discoideum (Social amoeba).